The chain runs to 178 residues: MERLVGKPAPEFEMKAVKGDGRGFTEVKLGDYKGKWLVMFFYPLDFTFVCPTEITGFSKRAEEFRDLKAELLAVSCDSQYSHETWINQDIKQGGLGKINFPIASDKTTEVSTKYGIQIEEEGISLRGLFIIDPEGIVRYSVVHDLNVGRSVDETLRVLKAFQTGGMCALDWHEGDDNL.

The Thioredoxin domain occupies 3-163; that stretch reads RLVGKPAPEF…TLRVLKAFQT (161 aa). Cysteine 50 serves as the catalytic Cysteine sulfenic acid (-SOH) intermediate.

This sequence belongs to the peroxiredoxin family. AhpC/Prx1 subfamily. As to quaternary structure, homodimer; disulfide-linked, upon oxidation.

It localises to the cytoplasm. The catalysed reaction is a hydroperoxide + [protein]-dithiol = [protein]-disulfide + an alcohol + H2O. Thiol-specific peroxidase that catalyzes the reduction of hydrogen peroxide and organic hydroperoxides to water and alcohols, respectively. Plays a role in cell protection against oxidative stress by detoxifying peroxides. In Clostridium pasteurianum, this protein is Putative peroxiredoxin in rubredoxin operon.